We begin with the raw amino-acid sequence, 74 residues long: MNRLIILVVAAVFLGMASAEEDVLKRGFPCRCDSDGPSVHGNPLSGTIWVTSCATGWHKCNSENELFHECCKQG.

The N-terminal stretch at 1 to 19 is a signal peptide; sequence MNRLIILVVAAVFLGMASA. The propeptide occupies 20–24; sequence EEDVL. Proline 29 carries the hydroxyproline modification. Intrachain disulfides connect cysteine 30/cysteine 70, cysteine 32/cysteine 60, and cysteine 53/cysteine 71. Glutamine amide is present on glutamine 73.

This sequence belongs to the sea anemone sodium channel inhibitory toxin family. Type I subfamily.

It localises to the secreted. It is found in the nematocyst. Inhibits voltage-gated sodium channels (Nav). The polypeptide is Delta-actitoxin-Amc3a (Antheopsis maculata (Sea anemone)).